The sequence spans 256 residues: uncharacterized protein (256 aa).

The segment at 211-256 (RKLQASVTTTPPKRCKLADRPAQTTQDTPRAPQPAPVRAQRPLFTL) is disordered. Low complexity predominate over residues 246-256 (PVRAQRPLFTL).

This is an uncharacterized protein from Orgyia pseudotsugata (Douglas-fir tussock moth).